Here is a 289-residue protein sequence, read N- to C-terminus: Ribosomal RNA small subunit methyltransferase A (289 aa).

Residues Asn21, Leu23, Gly48, Glu69, Asp94, and Asn120 each contribute to the S-adenosyl-L-methionine site.

The protein belongs to the class I-like SAM-binding methyltransferase superfamily. rRNA adenine N(6)-methyltransferase family. RsmA subfamily.

The protein resides in the cytoplasm. The enzyme catalyses adenosine(1518)/adenosine(1519) in 16S rRNA + 4 S-adenosyl-L-methionine = N(6)-dimethyladenosine(1518)/N(6)-dimethyladenosine(1519) in 16S rRNA + 4 S-adenosyl-L-homocysteine + 4 H(+). In terms of biological role, specifically dimethylates two adjacent adenosines (A1518 and A1519) in the loop of a conserved hairpin near the 3'-end of 16S rRNA in the 30S particle. May play a critical role in biogenesis of 30S subunits. This Haemophilus ducreyi (strain 35000HP / ATCC 700724) protein is Ribosomal RNA small subunit methyltransferase A.